We begin with the raw amino-acid sequence, 340 residues long: Phosphoribosylformylglycinamidine cyclo-ligase (340 aa).

It belongs to the AIR synthase family.

The protein resides in the cytoplasm. The catalysed reaction is 2-formamido-N(1)-(5-O-phospho-beta-D-ribosyl)acetamidine + ATP = 5-amino-1-(5-phospho-beta-D-ribosyl)imidazole + ADP + phosphate + H(+). It functions in the pathway purine metabolism; IMP biosynthesis via de novo pathway; 5-amino-1-(5-phospho-D-ribosyl)imidazole from N(2)-formyl-N(1)-(5-phospho-D-ribosyl)glycinamide: step 2/2. This Streptococcus pyogenes serotype M1 protein is Phosphoribosylformylglycinamidine cyclo-ligase.